The sequence spans 132 residues: Small ribosomal subunit protein uS8 (132 aa).

It belongs to the universal ribosomal protein uS8 family. As to quaternary structure, part of the 30S ribosomal subunit. Contacts proteins S5 and S12.

Functionally, one of the primary rRNA binding proteins, it binds directly to 16S rRNA central domain where it helps coordinate assembly of the platform of the 30S subunit. The sequence is that of Small ribosomal subunit protein uS8 from Rhizobium rhizogenes (strain K84 / ATCC BAA-868) (Agrobacterium radiobacter).